The following is a 398-amino-acid chain: Phosphoglycerate kinase (398 aa).

Residues 21-23, Arg37, 60-63, Arg117, and Arg157 contribute to the substrate site; these read DIN and HQGR. ATP-binding positions include Glu332 and 357–360; that span reads GGDT.

Belongs to the phosphoglycerate kinase family. In terms of assembly, monomer.

The protein localises to the cytoplasm. The enzyme catalyses (2R)-3-phosphoglycerate + ATP = (2R)-3-phospho-glyceroyl phosphate + ADP. It participates in carbohydrate degradation; glycolysis; pyruvate from D-glyceraldehyde 3-phosphate: step 2/5. In Halobacterium salinarum (strain ATCC 29341 / DSM 671 / R1), this protein is Phosphoglycerate kinase.